We begin with the raw amino-acid sequence, 119 residues long: Gibberellin-regulated protein 9 (119 aa).

Residues 1–24 (MKKMNVVAFVTLIISFLLLSQVLA) form the signal peptide.

This sequence belongs to the GASA family. Six disulfide bonds may be present.

It is found in the secreted. Its function is as follows. Gibberellin-regulated protein that may function in hormonal controlled steps of development such as seed germination, flowering and seed maturation. The protein is Gibberellin-regulated protein 9 (GASA9) of Arabidopsis thaliana (Mouse-ear cress).